The following is a 523-amino-acid chain: Rho guanine nucleotide exchange factor 8 (523 aa).

Over residues 44 to 57 (VESNTPESQNSDSF) the composition is skewed to polar residues. Disordered regions lie at residues 44–83 (VESNTPESQNSDSFVESPVESSLPMISPLTRPGKRSERQQ) and 442–523 (ETSD…KDRH). A PRONE domain is found at 76–440 (GKRSERQQAD…TLALKQTLLA (365 aa)). Over residues 465–475 (EAEKHDPHSKT) the composition is skewed to basic and acidic residues.

In terms of assembly, homodimer. The homodimer interacts with ARAC5/ROP4. Interacts with ARAC11/ROP1 and ARAC10/ROP11. Interacts with PRK6. In terms of tissue distribution, expressed in pollen grains and pollen tubes.

It localises to the cell membrane. Functionally, guanine-nucleotide exchange factor (GEF) that acts as an activator of Rop (Rho of plants) GTPases by promoting the exchange of GDP for GTP. Active as homodimer. The sequence is that of Rho guanine nucleotide exchange factor 8 from Arabidopsis thaliana (Mouse-ear cress).